A 470-amino-acid polypeptide reads, in one-letter code: UDP-glycosyltransferase 72D1 (470 aa).

Residues Ser276, 343-345 (APQ), 360-368 (HCGWSSALE), and 382-385 (YAEQ) contribute to the UDP-alpha-D-glucose site.

This sequence belongs to the UDP-glycosyltransferase family.

This is UDP-glycosyltransferase 72D1 (UGT72D1) from Arabidopsis thaliana (Mouse-ear cress).